Here is a 211-residue protein sequence, read N- to C-terminus: Dephospho-CoA kinase (211 aa).

The 203-residue stretch at 2–204 (IIGLTGSIGM…SGVRRWRRGK (203 aa)) folds into the DPCK domain. 10-15 (GMGKST) serves as a coordination point for ATP.

Belongs to the CoaE family.

Its subcellular location is the cytoplasm. The enzyme catalyses 3'-dephospho-CoA + ATP = ADP + CoA + H(+). It participates in cofactor biosynthesis; coenzyme A biosynthesis; CoA from (R)-pantothenate: step 5/5. Catalyzes the phosphorylation of the 3'-hydroxyl group of dephosphocoenzyme A to form coenzyme A. The protein is Dephospho-CoA kinase of Rhodospirillum rubrum (strain ATCC 11170 / ATH 1.1.1 / DSM 467 / LMG 4362 / NCIMB 8255 / S1).